We begin with the raw amino-acid sequence, 276 residues long: uncharacterized protein (276 aa).

Positions 1-16 (MELGLILMFASAFVSA) are cleaved as a signal peptide. Asparagine 265 carries N-linked (GlcNAc...) asparagine glycosylation.

This is an uncharacterized protein from Encephalitozoon cuniculi (strain GB-M1) (Microsporidian parasite).